Reading from the N-terminus, the 555-residue chain is Cytochrome P450 78A11 (555 aa).

The chain crosses the membrane as a helical span at residues 12–32 (VDATWWAYALPALLGADTLCA). C495 contacts heme.

Belongs to the cytochrome P450 family. It depends on heme as a cofactor. In terms of tissue distribution, expressed in seedlings, shoot apices and young panicles, but not in mature leaves, calli and roots.

It localises to the membrane. In terms of biological role, involved in the regular timing (plastochron) of lateral organs formation. May regulate the rate of leaf initiation and the duration of vegetative phase. Seems to be redundant to the function of PLASTOCHRON2, but to act in an independent pathway. The protein is Cytochrome P450 78A11 (CYP78A11) of Oryza sativa subsp. japonica (Rice).